The chain runs to 119 residues: Holo-[acyl-carrier-protein] synthase (119 aa).

The Mg(2+) site is built by aspartate 8 and glutamate 58.

The protein belongs to the P-Pant transferase superfamily. AcpS family. Mg(2+) serves as cofactor.

The protein localises to the cytoplasm. The enzyme catalyses apo-[ACP] + CoA = holo-[ACP] + adenosine 3',5'-bisphosphate + H(+). Its function is as follows. Transfers the 4'-phosphopantetheine moiety from coenzyme A to a Ser of acyl-carrier-protein. In Limosilactobacillus fermentum (strain NBRC 3956 / LMG 18251) (Lactobacillus fermentum), this protein is Holo-[acyl-carrier-protein] synthase.